Here is a 365-residue protein sequence, read N- to C-terminus: 3-isopropylmalate dehydrogenase (365 aa).

Residue 78–91 (GKKWNNLPIEKRPE) participates in NAD(+) binding. Substrate is bound by residues Arg-99, Arg-109, Arg-139, and Asp-228. Mg(2+)-binding residues include Asp-228, Asp-252, and Asp-256. 286–298 (GSAPDIAGKNIAN) contributes to the NAD(+) binding site.

The protein belongs to the isocitrate and isopropylmalate dehydrogenases family. LeuB type 1 subfamily. Homodimer. It depends on Mg(2+) as a cofactor. Requires Mn(2+) as cofactor.

The protein resides in the cytoplasm. The catalysed reaction is (2R,3S)-3-isopropylmalate + NAD(+) = 4-methyl-2-oxopentanoate + CO2 + NADH. Its pathway is amino-acid biosynthesis; L-leucine biosynthesis; L-leucine from 3-methyl-2-oxobutanoate: step 3/4. In terms of biological role, catalyzes the oxidation of 3-carboxy-2-hydroxy-4-methylpentanoate (3-isopropylmalate) to 3-carboxy-4-methyl-2-oxopentanoate. The product decarboxylates to 4-methyl-2 oxopentanoate. The protein is 3-isopropylmalate dehydrogenase of Buchnera aphidicola subsp. Macrosiphoniella ludovicianae.